The following is a 734-amino-acid chain: Photosystem I P700 chlorophyll a apoprotein A2 (734 aa).

8 helical membrane passes run 46 to 69 (IFAS…FHVA), 135 to 158 (LYTG…LHLQ), 175 to 199 (LNHH…HVAI), 273 to 291 (IAHH…GHMY), 330 to 353 (LHFQ…QHMY), 369 to 395 (AALY…IFFI), 417 to 439 (AIIS…LYVH), and 517 to 535 (FLVH…LILV). 2 residues coordinate [4Fe-4S] cluster: C559 and C568. 2 helical membrane passes run 575–596 (AFYL…YWHW) and 643–665 (LSVW…MFLI). 3 residues coordinate chlorophyll a: H654, M662, and Y670. W671 is a binding site for phylloquinone. Residues 707-727 (LVGLAHFSVGYIFTYAAFLIA) form a helical membrane-spanning segment.

This sequence belongs to the PsaA/PsaB family. In terms of assembly, the PsaA/B heterodimer binds the P700 chlorophyll special pair and subsequent electron acceptors. PSI consists of a core antenna complex that captures photons, and an electron transfer chain that converts photonic excitation into a charge separation. The eukaryotic PSI reaction center is composed of at least 11 subunits. Requires P700 is a chlorophyll a/chlorophyll a' dimer, A0 is one or more chlorophyll a, A1 is one or both phylloquinones and FX is a shared 4Fe-4S iron-sulfur center. as cofactor.

The protein localises to the plastid. The protein resides in the chloroplast thylakoid membrane. The enzyme catalyses reduced [plastocyanin] + hnu + oxidized [2Fe-2S]-[ferredoxin] = oxidized [plastocyanin] + reduced [2Fe-2S]-[ferredoxin]. PsaA and PsaB bind P700, the primary electron donor of photosystem I (PSI), as well as the electron acceptors A0, A1 and FX. PSI is a plastocyanin-ferredoxin oxidoreductase, converting photonic excitation into a charge separation, which transfers an electron from the donor P700 chlorophyll pair to the spectroscopically characterized acceptors A0, A1, FX, FA and FB in turn. Oxidized P700 is reduced on the lumenal side of the thylakoid membrane by plastocyanin. This chain is Photosystem I P700 chlorophyll a apoprotein A2, found in Piper cenocladum (Ant piper).